Reading from the N-terminus, the 719-residue chain is Pesticidal crystal protein Cry1Ia (719 aa).

Belongs to the delta endotoxin family.

Its function is as follows. Promotes colloidosmotic lysis by binding to the midgut epithelial cells of certain coleopteran and lepidopteran species. Active on Plutella xylostella and Bombyx mori. The protein is Pesticidal crystal protein Cry1Ia (cry1Ia) of Bacillus thuringiensis subsp. kurstaki.